The following is a 241-amino-acid chain: Homeobox protein TGIF2LX (241 aa).

Disordered stretches follow at residues 1-56 (MEAA…PKGY) and 115-213 (RHGN…EYPD). The span at 21–39 (AKTQSPAQDTSTVSRNSAD) shows a compositional bias: polar residues. The homeobox; TALE-type DNA-binding region spans 48–111 (EHTKKPKGYL…INARRRILPD (64 aa)).

The protein belongs to the TALE/TGIF homeobox family.

The protein resides in the nucleus. Its function is as follows. May have a transcription role in testis. The sequence is that of Homeobox protein TGIF2LX (TGIF2LX) from Hylobates lar (Lar gibbon).